A 49-amino-acid polypeptide reads, in one-letter code: Large ribosomal subunit protein bL33 (49 aa).

Belongs to the bacterial ribosomal protein bL33 family.

The protein is Large ribosomal subunit protein bL33 of Nitratidesulfovibrio vulgaris (strain ATCC 29579 / DSM 644 / CCUG 34227 / NCIMB 8303 / VKM B-1760 / Hildenborough) (Desulfovibrio vulgaris).